We begin with the raw amino-acid sequence, 88 residues long: Acyl-CoA-binding domain-containing protein 7 (88 aa).

The ACB domain occupies 3 to 88 (LQADFDQAAQ…ARELIEKYGI (86 aa)). An acyl-CoA-binding positions include R15, 30–34 (YGLYK), K56, and Y75.

Belongs to the ACBD7 family.

Functionally, binds medium- and long-chain acyl-CoA esters. This is Acyl-CoA-binding domain-containing protein 7 (Acbd7) from Mus musculus (Mouse).